Here is a 542-residue protein sequence, read N- to C-terminus: Aminotriazole resistance protein (542 aa).

Topologically, residues Met-1 to Ser-108 are cytoplasmic. A helical transmembrane segment spans residues Trp-109–Gly-129. The Extracellular portion of the chain corresponds to Asp-130–Lys-136. A helical membrane pass occupies residues Met-137–Tyr-157. The Cytoplasmic segment spans residues Ser-158–Gly-172. The chain crosses the membrane as a helical span at residues Leu-173–Gly-193. The Extracellular segment spans residues Thr-194–Asn-198. Residues Ile-199–Ala-219 traverse the membrane as a helical segment. At Gly-220–Pro-231 the chain is on the cytoplasmic side. Residues Trp-232–Ile-252 form a helical membrane-spanning segment. Topologically, residues Pro-253–His-262 are extracellular. The chain crosses the membrane as a helical span at residues Phe-263–Val-283. Residues Trp-284–Ala-295 lie on the Cytoplasmic side of the membrane. The chain crosses the membrane as a helical span at residues Tyr-296–Ile-316. The Extracellular portion of the chain corresponds to Arg-317–His-333. The helical transmembrane segment at Met-334 to Tyr-354 threads the bilayer. Residues Tyr-355–Gly-371 are Cytoplasmic-facing. The chain crosses the membrane as a helical span at residues Gly-372–Ile-392. At Lys-393–Val-399 the chain is on the extracellular side. A helical membrane pass occupies residues Phe-400 to Val-420. At His-421–Leu-429 the chain is on the cytoplasmic side. Residues Gly-430 to Phe-450 traverse the membrane as a helical segment. The Extracellular segment spans residues Ser-451–Leu-505. N-linked (GlcNAc...) asparagine glycosylation occurs at Asn-471. A helical transmembrane segment spans residues Gly-506–Ile-526. Residues Lys-527 to Ala-542 lie on the Cytoplasmic side of the membrane.

It belongs to the major facilitator superfamily.

It localises to the membrane. Functionally, putative component of the machinery responsible for pumping aminotriazole (and possibly other toxic compounds) out of the cell. Probable ATP-dependent export permease. Appears to confer resistance only to aminotriazole. The polypeptide is Aminotriazole resistance protein (ATR1) (Saccharomyces cerevisiae (strain ATCC 204508 / S288c) (Baker's yeast)).